The following is a 675-amino-acid chain: MTPSQVTFEIRGTLLPGEVFAICGSCDALGNWNPQNAVALINENETGDSVLWKAVIALNRGVSVKYRYFRGCFLEPKTIGGPCQVIVHKWETHLQPRSITPLESEIIIDDGQFGIHNGVETLDSGWLTCQTEIRLRLHFSEKPPVSISKKKFKKSRFRVKLTLEGLEEDEDDDDDKVSPTVLHKMSNSLEISLISDNEFKCRHSQPECGYGLQPDRWTEYSIQTMEPDNLELIFDFFEEDLSEHVVQGDVLPGHVGTACLLSSTIAESGRSAGILTLPIMSRNSRKTIGKVRVDFIIIKPLPGYSCSMQSSFSKYWKPRIPLDVGHRGAGNSTTTAKLAKVQENTIASLRNAASHGAAFVEFDVHLSKDFVPVVYHDLTCCLTMKRKYEADPVELFEIPVKELTFDQLQLLKLSHVTALKTKDRKQSLYEEENFFSENQPFPSLKMVLESLPENVGFNIEIKWICQHRDGVWDGNLSTYFDMNVFLDIILKTVLENSGKRRIVFSSFDADICTMVRQKQNKYPILFLTQGKSDIYPELMDLRSRTTPIAMSFAQFENILGINAHTEDLLRNPSYVQEAKAKGLVIFCWGDDTNDPENRRKLKEFGVNGLIYDRIYDWMPEQPNIFQVEQLERLKQELPELKNCLCPTVSHFIPSSFCVEPDIHVDANGIDSVENA.

Positions 1-115 constitute a CBM20 domain; that stretch reads MTPSQVTFEI…IIIDDGQFGI (115 aa). Substrate is bound by residues arginine 70 and 88-89; that span reads HK. A phosphoserine mark is found at serine 178 and serine 427. Residues 321–621 enclose the GP-PDE domain; sequence PLDVGHRGAG…DRIYDWMPEQ (301 aa). Residue tyrosine 611 is modified to Phosphotyrosine.

This sequence belongs to the glycerophosphoryl diester phosphodiesterase family. Widely expressed with highest levels in skeletal muscle and heart.

It is found in the cytoplasm. The protein localises to the cytosol. The enzyme catalyses sn-glycerol 3-phosphocholine + H2O = sn-glycerol 3-phosphate + choline + H(+). Functionally, may be involved in the negative regulation of skeletal muscle differentiation, independently of its glycerophosphocholine phosphodiesterase activity. The protein is Glycerophosphocholine phosphodiesterase GPCPD1 (Gpcpd1) of Mus musculus (Mouse).